Consider the following 168-residue polypeptide: G/U mismatch-specific DNA glycosylase (168 aa).

Belongs to the uracil-DNA glycosylase (UDG) superfamily. TDG/mug family. In terms of assembly, binds DNA as a monomer.

Its subcellular location is the cytoplasm. The enzyme catalyses Specifically hydrolyzes mismatched double-stranded DNA and polynucleotides, releasing free uracil.. In terms of biological role, excises ethenocytosine and uracil, which can arise by alkylation or deamination of cytosine, respectively, from the corresponding mispairs with guanine in ds-DNA. It is capable of hydrolyzing the carbon-nitrogen bond between the sugar-phosphate backbone of the DNA and the mispaired base. The complementary strand guanine functions in substrate recognition. Required for DNA damage lesion repair in stationary-phase cells. This chain is G/U mismatch-specific DNA glycosylase, found in Klebsiella pneumoniae subsp. pneumoniae (strain ATCC 700721 / MGH 78578).